Consider the following 249-residue polypeptide: 1-(5-phosphoribosyl)-5-[(5-phosphoribosylamino)methylideneamino] imidazole-4-carboxamide isomerase (249 aa).

Asp8 acts as the Proton acceptor in catalysis. The active-site Proton donor is the Asp131.

The protein belongs to the HisA/HisF family.

The protein resides in the cytoplasm. The enzyme catalyses 1-(5-phospho-beta-D-ribosyl)-5-[(5-phospho-beta-D-ribosylamino)methylideneamino]imidazole-4-carboxamide = 5-[(5-phospho-1-deoxy-D-ribulos-1-ylimino)methylamino]-1-(5-phospho-beta-D-ribosyl)imidazole-4-carboxamide. It participates in amino-acid biosynthesis; L-histidine biosynthesis; L-histidine from 5-phospho-alpha-D-ribose 1-diphosphate: step 4/9. This Leptothrix cholodnii (strain ATCC 51168 / LMG 8142 / SP-6) (Leptothrix discophora (strain SP-6)) protein is 1-(5-phosphoribosyl)-5-[(5-phosphoribosylamino)methylideneamino] imidazole-4-carboxamide isomerase.